Reading from the N-terminus, the 665-residue chain is Kinesin-like protein KIF22 (665 aa).

Residues 43–368 (RVRVAVRLRP…LNFAARSKEV (326 aa)) enclose the Kinesin motor domain. 127–134 (GPTGAGKT) lines the ATP pocket. Residues 379-428 (QPHALGPVKLSQKELLGPPEAKRARGPEEEEIGSPEPMAAPASASQKLSP) are disordered. Ser-412, Ser-427, and Ser-452 each carry phosphoserine. The segment covering 412–428 (SPEPMAAPASASQKLSP) has biased composition (low complexity). Lys-465 participates in a covalent cross-link: Glycyl lysine isopeptide (Lys-Gly) (interchain with G-Cter in SUMO2). The stretch at 465–508 (KRERMVLMKTVEEKDLEIERLKTKQKELEAKMLAQKAEEKENHC) forms a coiled coil. Ser-543, Ser-562, and Ser-581 each carry phosphoserine.

Belongs to the TRAFAC class myosin-kinesin ATPase superfamily. Kinesin family. Interacts with FAM83D. Interacts with SIAH1. Ubiquitinated; mediated by SIAH1 and leading to its subsequent proteasomal degradation. In terms of tissue distribution, expressed in bone, cartilage, joint capsule, ligament, skin, and primary cultured chondrocytes.

The protein localises to the nucleus. The protein resides in the cytoplasm. It localises to the cytoskeleton. In terms of biological role, kinesin family member that is involved in spindle formation and the movements of chromosomes during mitosis and meiosis. Binds to microtubules and to DNA. Plays a role in congression of laterally attached chromosomes in NDC80-depleted cells. The sequence is that of Kinesin-like protein KIF22 (KIF22) from Homo sapiens (Human).